The following is a 574-amino-acid chain: Serine carboxypeptidase ctsa-3.1 (574 aa).

Residues 1 to 19 (MCRTLLGVAFLVVTVLSQG) form the signal peptide. Asn48 and Asn163 each carry an N-linked (GlcNAc...) asparagine glycan. Ser172 is an active-site residue. N-linked (GlcNAc...) asparagine glycosylation is found at Asn241, Asn408, Asn414, and Asn426. Active-site residues include Asp441 and His507. A glycan (N-linked (GlcNAc...) asparagine) is linked at Asn534.

It belongs to the peptidase S10 family.

This is Serine carboxypeptidase ctsa-3.1 from Caenorhabditis elegans.